The chain runs to 314 residues: Putative 4-hydroxy-2-oxoglutarate aldolase, mitochondrial (314 aa).

50–51 contacts substrate; that stretch reads TN. The active-site Schiff-base intermediate with substrate is Lys171.

The protein belongs to the DapA family.

The catalysed reaction is (4S)-4-hydroxy-2-oxoglutarate = glyoxylate + pyruvate. The enzyme catalyses (4R)-4-hydroxy-2-oxoglutarate = glyoxylate + pyruvate. Functionally, may catalyze the final step in the metabolic pathway of hydroxyproline. The chain is Putative 4-hydroxy-2-oxoglutarate aldolase, mitochondrial from Coccidioides immitis (strain RS) (Valley fever fungus).